The following is a 155-amino-acid chain: D-aminoacyl-tRNA deacylase (155 aa).

The short motif at 137–138 (GP) is the Gly-cisPro motif, important for rejection of L-amino acids element.

This sequence belongs to the DTD family. Homodimer.

The protein localises to the cytoplasm. It catalyses the reaction glycyl-tRNA(Ala) + H2O = tRNA(Ala) + glycine + H(+). The enzyme catalyses a D-aminoacyl-tRNA + H2O = a tRNA + a D-alpha-amino acid + H(+). In terms of biological role, an aminoacyl-tRNA editing enzyme that deacylates mischarged D-aminoacyl-tRNAs. Also deacylates mischarged glycyl-tRNA(Ala), protecting cells against glycine mischarging by AlaRS. Acts via tRNA-based rather than protein-based catalysis; rejects L-amino acids rather than detecting D-amino acids in the active site. By recycling D-aminoacyl-tRNA to D-amino acids and free tRNA molecules, this enzyme counteracts the toxicity associated with the formation of D-aminoacyl-tRNA entities in vivo and helps enforce protein L-homochirality. This Roseiflexus sp. (strain RS-1) protein is D-aminoacyl-tRNA deacylase.